A 386-amino-acid polypeptide reads, in one-letter code: MATTKSFLILFFMILATTSSTCATLGEMVTVLSIDGGGIKGIIPAIILEFLEGQLQEVDNNKDARLADYFDVIGGTSTGGLLTAMITTPNENNRPFAAAKDIVPFYFEHGPHIFNYSGSIFGPRYDGKYLLQVLQEKLGETRVHQALTEVAISSFDIKTNKPVIFTKSNLAESPQLDAKMYDICYSTAAAPIYFPPHHFVTHTSNGATYEFNLVDGAVATVGDPALLSLSVATRLAQDDPAFSSIKSLDYKQMLLLSLGTGTNSEFDKTYTAEEAAKWGPLRWMLAIQQMTNAASSYMTDYYISTVFQARHSQNNYLRVQENALTGTTTEMDDASEANMELLVQVGETLLKKPVSKDSPETYEEALKRFAKLLSDRKKLRANKASH.

The N-terminal stretch at 1 to 23 (MATTKSFLILFFMILATTSSTCA) is a signal peptide. The PNPLA domain maps to 32–229 (LSIDGGGIKG…TVGDPALLSL (198 aa)). Residues 36-41 (GGGIKG) carry the GXGXXG motif. Positions 75 to 79 (GTSTG) match the GXSXG motif. Residue Ser77 is the Nucleophile of the active site. Residue Asn115 is glycosylated (N-linked (GlcNAc...) asparagine). The active-site Proton acceptor is Asp215. Residues 215–217 (DGA) carry the DGA/G motif.

The protein belongs to the patatin family.

It localises to the vacuole. Its function is as follows. Probable lipolytic acyl hydrolase (LAH), an activity which is thought to be involved in the response of tubers to pathogens. In Solanum tuberosum (Potato), this protein is Patatin.